We begin with the raw amino-acid sequence, 370 residues long: Neutral protease 2 homolog AFUB_070680 (370 aa).

An N-terminal signal peptide occupies residues Met-1–Ala-19. Positions Leu-20–Arg-172 are excised as a propeptide. 2 disulfide bridges follow: Cys-178–Cys-250 and Cys-257–Cys-275. Zn(2+) is bound at residue His-300. Residue Glu-301 is part of the active site. His-304 and Asp-315 together coordinate Zn(2+).

The protein belongs to the peptidase M35 family. It depends on Zn(2+) as a cofactor.

The protein resides in the secreted. The enzyme catalyses Preferential cleavage of bonds with hydrophobic residues in P1'. Also 3-Asn-|-Gln-4 and 8-Gly-|-Ser-9 bonds in insulin B chain.. In terms of biological role, secreted metalloproteinase that allows assimilation of proteinaceous substrates. Shows high activities on basic nuclear substrates such as histone and protamine. May be involved in virulence. This Aspergillus fumigatus (strain CBS 144.89 / FGSC A1163 / CEA10) (Neosartorya fumigata) protein is Neutral protease 2 homolog AFUB_070680.